The primary structure comprises 540 residues: Glucose-6-phosphate isomerase (540 aa).

Catalysis depends on Glu-350, which acts as the Proton donor. Residues His-381 and Lys-503 contribute to the active site.

Belongs to the GPI family.

The protein resides in the cytoplasm. It carries out the reaction alpha-D-glucose 6-phosphate = beta-D-fructose 6-phosphate. Its pathway is carbohydrate biosynthesis; gluconeogenesis. The protein operates within carbohydrate degradation; glycolysis; D-glyceraldehyde 3-phosphate and glycerone phosphate from D-glucose: step 2/4. Its function is as follows. Catalyzes the reversible isomerization of glucose-6-phosphate to fructose-6-phosphate. The polypeptide is Glucose-6-phosphate isomerase (Burkholderia mallei (strain NCTC 10247)).